Here is a 97-residue protein sequence, read N- to C-terminus: Small ribosomal subunit protein eS25 (97 aa).

Residues 1–24 are disordered; the sequence is MAPAASGAKKQKKKWSKGKVKDKA. Positions 9-18 are enriched in basic residues; sequence KKQKKKWSKG.

This sequence belongs to the eukaryotic ribosomal protein eS25 family. In terms of assembly, component of the small ribosomal subunit (SSU). Mature N.crassa ribosomes consist of a small (40S) and a large (60S) subunit. The 40S small subunit contains 1 molecule of ribosomal RNA (18S rRNA) and at least 32 different proteins. The large 60S subunit contains 3 rRNA molecules (26S, 5.8S and 5S rRNA) and at least 42 different proteins.

It localises to the cytoplasm. Its function is as follows. Component of the ribosome, a large ribonucleoprotein complex responsible for the synthesis of proteins in the cell. The small ribosomal subunit (SSU) binds messenger RNAs (mRNAs) and translates the encoded message by selecting cognate aminoacyl-transfer RNA (tRNA) molecules. The large subunit (LSU) contains the ribosomal catalytic site termed the peptidyl transferase center (PTC), which catalyzes the formation of peptide bonds, thereby polymerizing the amino acids delivered by tRNAs into a polypeptide chain. The nascent polypeptides leave the ribosome through a tunnel in the LSU and interact with protein factors that function in enzymatic processing, targeting, and the membrane insertion of nascent chains at the exit of the ribosomal tunnel. This Neurospora crassa (strain ATCC 24698 / 74-OR23-1A / CBS 708.71 / DSM 1257 / FGSC 987) protein is Small ribosomal subunit protein eS25 (rps-25).